A 217-amino-acid polypeptide reads, in one-letter code: 3,4-dihydroxy-2-butanone 4-phosphate synthase (217 aa).

Residues 37-38, D42, 150-154, and E174 each bind D-ribulose 5-phosphate; these read RE and RGGHT. E38 is a binding site for Mg(2+). H153 is a binding site for Mg(2+).

The protein belongs to the DHBP synthase family. As to quaternary structure, homodimer. The cofactor is Mg(2+). Mn(2+) serves as cofactor.

The catalysed reaction is D-ribulose 5-phosphate = (2S)-2-hydroxy-3-oxobutyl phosphate + formate + H(+). It participates in cofactor biosynthesis; riboflavin biosynthesis; 2-hydroxy-3-oxobutyl phosphate from D-ribulose 5-phosphate: step 1/1. In terms of biological role, catalyzes the conversion of D-ribulose 5-phosphate to formate and 3,4-dihydroxy-2-butanone 4-phosphate. This Escherichia coli O127:H6 (strain E2348/69 / EPEC) protein is 3,4-dihydroxy-2-butanone 4-phosphate synthase.